The sequence spans 81 residues: Dermaseptin-S6 (81 aa).

Residues Met-1–Ser-22 form the signal peptide. A disordered region spans residues Ser-22–Ser-49. A propeptide spanning residues Glu-23–Arg-45 is cleaved from the precursor. Acidic residues predominate over residues Glu-30–Ser-41. Position 78 is an isoleucine amide (Ile-78). A propeptide spanning residues Glu-80–Gln-81 is cleaved from the precursor.

This sequence belongs to the frog skin active peptide (FSAP) family. Dermaseptin subfamily. As to expression, expressed by the skin glands.

It localises to the secreted. Its function is as follows. Antimicrobial peptide. This is Dermaseptin-S6 from Phyllomedusa sauvagei (Sauvage's leaf frog).